The primary structure comprises 426 residues: Adenylosuccinate synthetase (426 aa).

Residues 14–20 (GDEGKGK) and 42–44 (GHT) each bind GTP. Catalysis depends on Asp15, which acts as the Proton acceptor. Residues Asp15 and Gly42 each coordinate Mg(2+). IMP is bound by residues 15-18 (DEGK), 40-43 (NAGH), Thr130, Arg144, Gln224, Thr239, and Arg303. The Proton donor role is filled by His43. 299-305 (TVTKRPR) contacts substrate. GTP-binding positions include Arg305, 331 to 333 (LID), and 413 to 415 (SVG).

This sequence belongs to the adenylosuccinate synthetase family. As to quaternary structure, homodimer. It depends on Mg(2+) as a cofactor.

The protein localises to the cytoplasm. The enzyme catalyses IMP + L-aspartate + GTP = N(6)-(1,2-dicarboxyethyl)-AMP + GDP + phosphate + 2 H(+). The protein operates within purine metabolism; AMP biosynthesis via de novo pathway; AMP from IMP: step 1/2. Its function is as follows. Plays an important role in the de novo pathway of purine nucleotide biosynthesis. Catalyzes the first committed step in the biosynthesis of AMP from IMP. The chain is Adenylosuccinate synthetase from Malacoplasma penetrans (strain HF-2) (Mycoplasma penetrans).